A 188-amino-acid chain; its full sequence is Meiotically up-regulated gene 94 protein (188 aa).

Its subcellular location is the cytoplasm. The protein resides in the nucleus. Functionally, has a role in meiosis. This Schizosaccharomyces pombe (strain 972 / ATCC 24843) (Fission yeast) protein is Meiotically up-regulated gene 94 protein (mug94).